The primary structure comprises 211 residues: Ribosomal RNA small subunit methyltransferase G (211 aa).

Residues Gly72, Phe77, 125 to 126 (IE), and Arg141 contribute to the S-adenosyl-L-methionine site.

It belongs to the methyltransferase superfamily. RNA methyltransferase RsmG family.

It localises to the cytoplasm. The enzyme catalyses guanosine(527) in 16S rRNA + S-adenosyl-L-methionine = N(7)-methylguanosine(527) in 16S rRNA + S-adenosyl-L-homocysteine. Its function is as follows. Specifically methylates the N7 position of guanine in position 527 of 16S rRNA. The sequence is that of Ribosomal RNA small subunit methyltransferase G from Allorhizobium ampelinum (strain ATCC BAA-846 / DSM 112012 / S4) (Agrobacterium vitis (strain S4)).